The following is a 752-amino-acid chain: Complement C2 (752 aa).

Positions 1–20 (MGPLMVLFCLLFVYTGLADS) are cleaved as a signal peptide. Sushi domains are found at residues 22–86 (PSCP…VCKP), 87–146 (VRCP…VCDN), and 149–206 (GHCP…ICRQ). Cystine bridges form between C24–C64, C51–C84, C89–C131, C117–C144, C151–C191, and C177–C204. Residue N29 is glycosylated (N-linked (GlcNAc...) asparagine). Residue N112 is glycosylated (N-linked (GlcNAc...) asparagine). The VWFA domain occupies 254 to 452 (NLYLLLDCSQ…KALHQVFEHM (199 aa)). Residues 260–264 (DCSQS) carry the MIDAS-like motif motif. 2 residues coordinate Mg(2+): S262 and S264. N290 and N333 each carry an N-linked (GlcNAc...) asparagine glycan. T337 is a binding site for Mg(2+). Disulfide bonds link C463–C581, C492–C508, and C584–C600. Residues 464–744 (GVGNMSANAS…MQPWLRQHLG (281 aa)) form the Peptidase S1 domain. N-linked (GlcNAc...) asparagine glycosylation is found at N467 and N471. Catalysis depends on charge relay system residues H507 and D561. N621 and N651 each carry an N-linked (GlcNAc...) asparagine glycan. Disulfide bonds link C638–C665 and C675–C705. S679 (charge relay system) is an active-site residue.

This sequence belongs to the peptidase S1 family. In terms of assembly, serine protease component of the C3 convertase, also named C4bC2b, composed of the serine protease complement C2b and complement C4b. Serine protease component of the C5 convertase, also named C4bC2bC3b, composed of the serine protease complement C2b, complement C3b, as well as complement C4b. Mg(2+) serves as cofactor. Requires Mn(2+) as cofactor. Cleaved and activated by different proteases depending on the complement pathway to generate complement C2a and serine protease complement C2b chains. Cleaved and activated by C1S following activation by the classical complement system. Cleaved and activated by MASP2 following activation by the lectin complement system. Cleaved and activated by GZMK following activation by the GZMK complement system.

It localises to the secreted. The protein localises to the cell surface. It catalyses the reaction Selective cleavage of Arg-|-Ser bond in complement component C3 alpha-chain to form C3a and C3b, and Arg-|-Xaa bond in complement component C5 alpha-chain to form C5a and C5b.. In terms of biological role, precursor of the catalytic component of the C3 and C5 convertase complexes, which are part of the complement pathway, a cascade of proteins that leads to phagocytosis and breakdown of pathogens and signaling that strengthens the adaptive immune system. Component C2 is part of the classical, lectin and GZMK complement systems. Its function is as follows. Catalytic component of the complement C3 and C5 convertase complexes. Following complement activation, recruited to the surface of pathogens by complement C4b opsonin to form the C3 convertase, or C3b and C4b opsonins to form the C5 convertase. As part of the C3 convertase, cleaves and activate C3 into C3a anaphylatoxin and C3b opsonin, the next components of the complement pathways. As part of the C5 convertase, cleaves and activate C5 into C5a anaphylatoxin and C5b component of the membrane attack complex. The polypeptide is Complement C2 (Gorilla gorilla gorilla (Western lowland gorilla)).